A 242-amino-acid polypeptide reads, in one-letter code: Triosephosphate isomerase (242 aa).

Residue 8 to 10 (NWK) participates in substrate binding. The Electrophile role is filled by His-91. Glu-155 (proton acceptor) is an active-site residue. Substrate is bound by residues Gly-161 and Ser-192.

It belongs to the triosephosphate isomerase family. Homodimer.

The protein resides in the cytoplasm. The catalysed reaction is D-glyceraldehyde 3-phosphate = dihydroxyacetone phosphate. It functions in the pathway carbohydrate biosynthesis; gluconeogenesis. Its pathway is carbohydrate degradation; glycolysis; D-glyceraldehyde 3-phosphate from glycerone phosphate: step 1/1. Involved in the gluconeogenesis. Catalyzes stereospecifically the conversion of dihydroxyacetone phosphate (DHAP) to D-glyceraldehyde-3-phosphate (G3P). This Wolbachia pipientis wMel protein is Triosephosphate isomerase.